We begin with the raw amino-acid sequence, 152 residues long: SsrA-binding protein (152 aa).

It belongs to the SmpB family.

The protein resides in the cytoplasm. Functionally, required for rescue of stalled ribosomes mediated by trans-translation. Binds to transfer-messenger RNA (tmRNA), required for stable association of tmRNA with ribosomes. tmRNA and SmpB together mimic tRNA shape, replacing the anticodon stem-loop with SmpB. tmRNA is encoded by the ssrA gene; the 2 termini fold to resemble tRNA(Ala) and it encodes a 'tag peptide', a short internal open reading frame. During trans-translation Ala-aminoacylated tmRNA acts like a tRNA, entering the A-site of stalled ribosomes, displacing the stalled mRNA. The ribosome then switches to translate the ORF on the tmRNA; the nascent peptide is terminated with the 'tag peptide' encoded by the tmRNA and targeted for degradation. The ribosome is freed to recommence translation, which seems to be the essential function of trans-translation. The chain is SsrA-binding protein from Helicobacter acinonychis (strain Sheeba).